Here is a 714-residue protein sequence, read N- to C-terminus: Fatty acid oxidation complex subunit alpha (714 aa).

The interval 1–190 (MEMASAFTLN…KLGLVDDVVP (190 aa)) is enoyl-CoA hydratase. Residues 306–714 (APLNSVGILG…FWKTTATDLQ (409 aa)) form a 3-hydroxyacyl-CoA dehydrogenase region.

This sequence in the N-terminal section; belongs to the enoyl-CoA hydratase/isomerase family. In the central section; belongs to the 3-hydroxyacyl-CoA dehydrogenase family. As to quaternary structure, heterotetramer of two alpha chains (FadJ) and two beta chains (FadI).

The protein localises to the cytoplasm. The enzyme catalyses a (3S)-3-hydroxyacyl-CoA = a (2E)-enoyl-CoA + H2O. It carries out the reaction a 4-saturated-(3S)-3-hydroxyacyl-CoA = a (3E)-enoyl-CoA + H2O. It catalyses the reaction a (3S)-3-hydroxyacyl-CoA + NAD(+) = a 3-oxoacyl-CoA + NADH + H(+). The catalysed reaction is (3S)-3-hydroxybutanoyl-CoA = (3R)-3-hydroxybutanoyl-CoA. It participates in lipid metabolism; fatty acid beta-oxidation. Functionally, catalyzes the formation of a hydroxyacyl-CoA by addition of water on enoyl-CoA. Also exhibits 3-hydroxyacyl-CoA epimerase and 3-hydroxyacyl-CoA dehydrogenase activities. The polypeptide is Fatty acid oxidation complex subunit alpha (Escherichia coli O127:H6 (strain E2348/69 / EPEC)).